Reading from the N-terminus, the 1845-residue chain is Helicase swr-1 (1845 aa).

Polar residues predominate over residues 1–13; sequence MTTMMTDSGTASD. The segment at 1-329 is disordered; sequence MTTMMTDSGT…GASRATPRIK (329 aa). A compositionally biased stretch (low complexity) spans 24–38; the sequence is NDTTTTTTTTTTPGD. Polar residues predominate over residues 63–84; the sequence is SKSYSSTHHVPAIDNTSTTNAN. Low complexity predominate over residues 98 to 108; the sequence is SPLSSISSPLS. Over residues 168–180 the composition is skewed to basic and acidic residues; it reads PKPESPPWKKFEA. The span at 216–243 shows a compositional bias: polar residues; that stretch reads AIQTSPVSNKSSASTSRKPAPASSSNSK. 2 stretches are compositionally biased toward pro residues: residues 248–258 and 283–292; these read KMPPPPPPPKA and PRRPATPPKP. An HSA domain is found at 418-493; sequence PEAEEEPPRQ…EMEASKAKWR (76 aa). Disordered regions lie at residues 539–713 and 749–935; these read QKLQ…LFFG and ELQV…TVKT. Residues 549–565 show a composition bias toward acidic residues; it reads DGDEITDEDEDEDDEDL. Over residues 574 to 585 the composition is skewed to basic and acidic residues; that stretch reads GDEKESDEHSDQ. 2 stretches are compositionally biased toward acidic residues: residues 586-608 and 663-704; these read GSDE…SSED and NDDD…DDEP. 2 stretches are compositionally biased toward polar residues: residues 762-777 and 815-834; these read TNGT…SQTE and TNDS…NQTL. A compositionally biased stretch (low complexity) spans 888–897; sequence SQSQTQSPKT. Basic and acidic residues predominate over residues 898 to 909; sequence TDTKPTDVDTPH. Residues 922-933 show a composition bias toward polar residues; it reads RQSSPQPTTPTV. Residues 957–1122 enclose the Helicase ATP-binding domain; it reads AGLYANNTNG…WSLLYFLAPP (166 aa). Residue 970 to 977 coordinates ATP; that stretch reads DEMGLGKT. Residues 1073–1076 carry the DEAH box motif; the sequence is DEAH. The Helicase C-terminal domain occupies 1510–1660; the sequence is ALDKLLRKLQ…DVVIQEGEFT (151 aa). Disordered stretches follow at residues 1702-1724, 1751-1783, and 1816-1845; these read TTGA…PPVR, QDEA…GGEE, and LEGT…SRKR. Positions 1704–1718 are enriched in gly residues; it reads GAGGYDGTADGGGGA. Residues 1769–1781 show a composition bias toward low complexity; that stretch reads DGLADLDGQLLGG. Residues 1826-1845 are compositionally biased toward basic residues; that stretch reads DRKKGRDRNRNRKGKDSRKR.

Belongs to the SNF2/RAD54 helicase family. SWR1 subfamily. As to quaternary structure, component of the SWR1 chromatin-remodeling complex.

Its subcellular location is the nucleus. The catalysed reaction is ATP + H2O = ADP + phosphate + H(+). Functionally, catalytic component of the SWR1 complex which mediates the ATP-dependent exchange of histone H2A for the H2A variant H2A.Z leading to transcriptional regulation of selected genes by chromatin remodeling. The polypeptide is Helicase swr-1 (crf1-1) (Neurospora crassa (strain ATCC 24698 / 74-OR23-1A / CBS 708.71 / DSM 1257 / FGSC 987)).